The primary structure comprises 306 residues: Tryptophan 2,3-dioxygenase (306 aa).

Residues 75-79 (FIIQH), tyrosine 137, and arginine 141 contribute to the substrate site. Histidine 264 is a binding site for heme. Substrate is bound at residue threonine 278.

The protein belongs to the tryptophan 2,3-dioxygenase family. Homotetramer. It depends on heme as a cofactor.

It catalyses the reaction L-tryptophan + O2 = N-formyl-L-kynurenine. It functions in the pathway amino-acid degradation; L-tryptophan degradation via kynurenine pathway; L-kynurenine from L-tryptophan: step 1/2. Its function is as follows. Heme-dependent dioxygenase that catalyzes the oxidative cleavage of the L-tryptophan (L-Trp) pyrrole ring and converts L-tryptophan to N-formyl-L-kynurenine. Catalyzes the oxidative cleavage of the indole moiety. This Paraburkholderia phytofirmans (strain DSM 17436 / LMG 22146 / PsJN) (Burkholderia phytofirmans) protein is Tryptophan 2,3-dioxygenase.